Consider the following 560-residue polypeptide: MEGGSEHTKDPGGEGGDGESLAARPSKIKASSGPPTPPEPGELESEPEEEEEEEEEEEEEASQGGTAADEQAKVPKELTAAEAAGEEGPGEPGRPAKPQPEPEEPAEAGAEEPVQPKSGAGPEELDAEARAEELEQAAEGKEVRSQASLPLTRIGEEEAAAAPEAETERVEGEEEDEEETRRDGAESEGRAGEGRPAKSQEEGKPLGGRDEFEDLEWSEEVQKLQEQQLRSDLLDQYRSLLMERNRSQRYNLYLQHKIFEALRKKKGLEAAEVPDRGAQAEAPEKEQAYLRHLGMLEDLKKQQADDLQWYHQELGQLKQQCQEKLSRVEKEWRRFQALKKQVVMQAMGSCRMRGGRQAALREVEQILALEDKKEKEMSAVRLENVQLKQSLVHFETRMRTQEDLTQGLLLIDFEQLKIENQTFNEKIEERNEELLKLRNKVTNSVQVITHMKEKLHFMDTENACKKKQLAEIEAQVAQGRDILTKTKQAREGLRTDNIRLNQKCGLLGNDSLLRDLEEKVDKTQLLHQRLESLKRHHAGLTLSCRGVRQKIREAKAFLPS.

Basic and acidic residues predominate over residues 1–12; it reads MEGGSEHTKDPG. Residues 1-209 are disordered; sequence MEGGSEHTKD…QEEGKPLGGR (209 aa). Composition is skewed to acidic residues over residues 41–61 and 101–110; these read GELE…EEEA and EPEEPAEAGA. Basic and acidic residues-rich tracts occupy residues 127 to 144 and 179 to 209; these read AEAR…KEVR and ETRR…LGGR. Coiled coils occupy residues 357–481 and 510–536; these read QAAL…QGRD and DSLL…LKRH.

The protein belongs to the CFAP184 family. As to quaternary structure, forms a complex with CFAP263; the interaction is required for functional activity in cilia.

It is found in the cell projection. The protein localises to the cilium. The protein resides in the cytoplasm. It localises to the cytoskeleton. Its subcellular location is the microtubule organizing center. It is found in the centrosome. Functionally, in complex with CFAP263, acts as a regulator of ciliary beating that connects radial spoke 3 (RS3) to the inner dynein arm (IDA) and the nexin-dynein regulatory complex (N-DRC). The complex is positioned parallel to N-DRC and forms a connection between the arch at the base of RS3, the IDA tail and N-DRC. In Macaca fascicularis (Crab-eating macaque), this protein is Cilia- and flagella-associated protein 184 (CFAP184).